The chain runs to 540 residues: uncharacterized protein (540 aa).

ABC transporter domains follow at residues 2–252 (IAVN…KLSQ) and 320–537 (LRVE…LTEL). Residue 34–41 (GANGAGKS) coordinates ATP.

The protein belongs to the ABC transporter superfamily.

This is an uncharacterized protein from Bacillus subtilis (strain 168).